Consider the following 168-residue polypeptide: Transcriptional repressor NrdR (168 aa).

A zinc finger lies at C3–C34. The ATP-cone domain occupies P49–E139.

This sequence belongs to the NrdR family. Requires Zn(2+) as cofactor.

Functionally, negatively regulates transcription of bacterial ribonucleotide reductase nrd genes and operons by binding to NrdR-boxes. The chain is Transcriptional repressor NrdR from Myxococcus xanthus (strain DK1622).